Here is a 438-residue protein sequence, read N- to C-terminus: C4-dicarboxylate transport protein 1 (438 aa).

8 helical membrane-spanning segments follow: residues 20-42 (LYVQ…PSVA), 57-77 (LIKM…IAHI), 90-112 (ALFY…GNLV), 160-179 (VLQV…ALGK), 192-214 (AHAV…FGAM), 229-251 (LIGL…LGLI), 324-346 (LFIA…LLVA), and 361-383 (FITL…AIVF).

It belongs to the dicarboxylate/amino acid:cation symporter (DAACS) (TC 2.A.23) family.

The protein localises to the cell inner membrane. In terms of biological role, responsible for the transport of dicarboxylates such as succinate, fumarate, and malate from the periplasm across the membrane. This is C4-dicarboxylate transport protein 1 from Bradyrhizobium diazoefficiens (strain JCM 10833 / BCRC 13528 / IAM 13628 / NBRC 14792 / USDA 110).